Reading from the N-terminus, the 673-residue chain is Transcription initiation factor IIB (673 aa).

Residues 38–69 (EEIVCPICGSKEVVKDYERAEIVCAKCGCVIK) form a TFIIB-type zinc finger. Positions 42, 45, 61, and 64 each coordinate Zn(2+). The region spanning 238–357 (ILGYIIAEGY…VIFLLLQIKE (120 aa)) is the DOD-type homing endonuclease domain. 2 consecutive repeat copies span residues 490 to 573 (SELD…AREL) and 584 to 665 (DYVP…ELTE).

Belongs to the TFIIB family. Post-translationally, this protein undergoes a protein self splicing that involves a post-translational excision of the intervening region (intein) followed by peptide ligation.

Its function is as follows. Stabilizes TBP binding to an archaeal box-A promoter. Also responsible for recruiting RNA polymerase II to the pre-initiation complex (DNA-TBP-TFIIB). The chain is Transcription initiation factor IIB (tfb) from Methanocaldococcus jannaschii (strain ATCC 43067 / DSM 2661 / JAL-1 / JCM 10045 / NBRC 100440) (Methanococcus jannaschii).